The following is a 1142-amino-acid chain: Melanoma-associated antigen C1 (1142 aa).

The disordered stretch occupies residues 1 to 132 (MGDKDMPTAG…DVQSPLQNPA (132 aa)). Residues 13 to 42 (SLLQSSSESPQSCPEGEDSQSPLQIPQSSP) are compositionally biased toward low complexity. The residue at position 63 (serine 63) is a Phosphoserine. The segment covering 76 to 87 (SQSPLQIPQSSP) has biased composition (low complexity). Over residues 92 to 103 (TQSPLQNSQSSP) the composition is skewed to polar residues. A phosphoserine mark is found at serine 207 and serine 382. Disordered stretches follow at residues 502-778 (TQST…LQRP) and 791-893 (LQSS…SLTD). The segment covering 614–626 (SPLQGEEFQSSLQ) has biased composition (polar residues). The segment covering 627-659 (SPVSICSSSTPSSLPQSFPESSQSPPEGPVQSP) has biased composition (low complexity). Residues 671 to 680 (HSQSPLQSPE) are compositionally biased toward polar residues. Composition is skewed to low complexity over residues 741–762 (QSPV…FPES) and 807–889 (QSPL…LESD). Positions 908 to 1106 (LDEKVDELAR…ITFPSSYKDA (199 aa)) constitute an MAGE domain. Position 1063 is a phosphoserine (serine 1063). The tract at residues 1118-1142 (IDTTDDSTATESASSSVMSPSFSSE) is disordered. The span at 1123 to 1142 (DSTATESASSSVMSPSFSSE) shows a compositional bias: low complexity.

As to expression, expressed in testis and in tumors of a wide variety of histologic types.

Its subcellular location is the cytoplasm. This Homo sapiens (Human) protein is Melanoma-associated antigen C1 (MAGEC1).